A 179-amino-acid chain; its full sequence is Large ribosomal subunit protein uL6 (179 aa).

The protein belongs to the universal ribosomal protein uL6 family. As to quaternary structure, part of the 50S ribosomal subunit.

Its function is as follows. This protein binds to the 23S rRNA, and is important in its secondary structure. It is located near the subunit interface in the base of the L7/L12 stalk, and near the tRNA binding site of the peptidyltransferase center. The protein is Large ribosomal subunit protein uL6 of Leptospira interrogans serogroup Icterohaemorrhagiae serovar copenhageni (strain Fiocruz L1-130).